Here is a 456-residue protein sequence, read N- to C-terminus: Argininosuccinate lyase (456 aa).

The protein belongs to the lyase 1 family. Argininosuccinate lyase subfamily.

Its subcellular location is the cytoplasm. It catalyses the reaction 2-(N(omega)-L-arginino)succinate = fumarate + L-arginine. It functions in the pathway amino-acid biosynthesis; L-arginine biosynthesis; L-arginine from L-ornithine and carbamoyl phosphate: step 3/3. In Listeria monocytogenes serovar 1/2a (strain ATCC BAA-679 / EGD-e), this protein is Argininosuccinate lyase.